A 607-amino-acid chain; its full sequence is Fatty acid amide hydrolase (607 aa).

Active-site charge relay system residues include Lys-204 and Ser-280. 301 to 304 is a substrate binding site; sequence GGGS. The active-site Acyl-ester intermediate is the Ser-304.

The protein belongs to the amidase family. In terms of assembly, forms homodimers.

It localises to the endoplasmic reticulum membrane. The protein localises to the cell membrane. The enzyme catalyses N-(9Z,12Z-octadecadienoyl)-ethanolamine + H2O = ethanolamine + (9Z,12Z)-octadecadienoate. Catalyzes the hydrolysis of bioactive endogenous fatty acid amides to their corresponding acids. The hydrolysis of endogenous amidated lipids terminates their participation as lipid mediators in various signaling systems. Converts a wide range of N-acylethanolamines (NAEs) to their corresponding free fatty acids and ethanolamine. This is Fatty acid amide hydrolase from Medicago truncatula (Barrel medic).